We begin with the raw amino-acid sequence, 341 residues long: L-threonine 3-dehydrogenase (341 aa).

C38 lines the Zn(2+) pocket. Residues T40 and H43 each act as charge relay system in the active site. Positions 63, 64, 93, 96, 99, and 107 each coordinate Zn(2+). NAD(+) is bound by residues I175, D195, R200, 262–264 (LGI), and 286–287 (IY).

The protein belongs to the zinc-containing alcohol dehydrogenase family. In terms of assembly, homotetramer. Zn(2+) is required as a cofactor.

It is found in the cytoplasm. It carries out the reaction L-threonine + NAD(+) = (2S)-2-amino-3-oxobutanoate + NADH + H(+). It participates in amino-acid degradation; L-threonine degradation via oxydo-reductase pathway; glycine from L-threonine: step 1/2. Its function is as follows. Catalyzes the NAD(+)-dependent oxidation of L-threonine to 2-amino-3-ketobutyrate. The chain is L-threonine 3-dehydrogenase from Shewanella baltica (strain OS185).